Reading from the N-terminus, the 506-residue chain is Chorion-specific transcription factor GCMb (506 aa).

Residues L19–A174 constitute a DNA-binding region (GCM). Zn(2+) is bound by residues C81, C87, C91, C118, C121, C130, H157, and H159. Residues G155–R172 show a composition bias toward basic and acidic residues. Residues G155–N213 form a disordered region. The segment at L379 to Q395 is C-terminal conserved inhibitory domain (CCID).

It is found in the nucleus. Transcription factor that binds specific sequences on gene promoters and activate their transcription. Through the regulation of gene transcription, may play a role in parathyroid gland development. In Homo sapiens (Human), this protein is Chorion-specific transcription factor GCMb.